The chain runs to 404 residues: Formate-dependent phosphoribosylglycinamide formyltransferase (404 aa).

N(1)-(5-phospho-beta-D-ribosyl)glycinamide-binding positions include 25–26 (EL) and Glu-85. Residues Arg-118, Lys-159, 164–169 (SSGKGQ), 199–202 (EGFV), and Glu-207 contribute to the ATP site. Residues 123–318 (RLAAEELGLP…EFELHARAIL (196 aa)) form the ATP-grasp domain. 2 residues coordinate Mg(2+): Glu-277 and Glu-289. N(1)-(5-phospho-beta-D-ribosyl)glycinamide-binding positions include Asp-296, Lys-365, and 372–373 (RR).

Belongs to the PurK/PurT family. Homodimer.

The enzyme catalyses N(1)-(5-phospho-beta-D-ribosyl)glycinamide + formate + ATP = N(2)-formyl-N(1)-(5-phospho-beta-D-ribosyl)glycinamide + ADP + phosphate + H(+). It functions in the pathway purine metabolism; IMP biosynthesis via de novo pathway; N(2)-formyl-N(1)-(5-phospho-D-ribosyl)glycinamide from N(1)-(5-phospho-D-ribosyl)glycinamide (formate route): step 1/1. Functionally, involved in the de novo purine biosynthesis. Catalyzes the transfer of formate to 5-phospho-ribosyl-glycinamide (GAR), producing 5-phospho-ribosyl-N-formylglycinamide (FGAR). Formate is provided by PurU via hydrolysis of 10-formyl-tetrahydrofolate. This is Formate-dependent phosphoribosylglycinamide formyltransferase from Burkholderia thailandensis (strain ATCC 700388 / DSM 13276 / CCUG 48851 / CIP 106301 / E264).